The following is a 198-amino-acid chain: Recombination protein RecR (198 aa).

The C4-type zinc-finger motif lies at 57 to 72 (CSVCGHITDRDPCYIC). A Toprim domain is found at 80-175 (SVVCVVQEPK…KVTRIAHGLP (96 aa)).

This sequence belongs to the RecR family.

May play a role in DNA repair. It seems to be involved in an RecBC-independent recombinational process of DNA repair. It may act with RecF and RecO. The protein is Recombination protein RecR of Bacillus cytotoxicus (strain DSM 22905 / CIP 110041 / 391-98 / NVH 391-98).